A 188-amino-acid polypeptide reads, in one-letter code: Adenine phosphoribosyltransferase (188 aa).

It belongs to the purine/pyrimidine phosphoribosyltransferase family. As to quaternary structure, homodimer.

It localises to the cytoplasm. The enzyme catalyses AMP + diphosphate = 5-phospho-alpha-D-ribose 1-diphosphate + adenine. It functions in the pathway purine metabolism; AMP biosynthesis via salvage pathway; AMP from adenine: step 1/1. In terms of biological role, catalyzes a salvage reaction resulting in the formation of AMP, that is energically less costly than de novo synthesis. The protein is Adenine phosphoribosyltransferase of Burkholderia cenocepacia (strain HI2424).